Reading from the N-terminus, the 455-residue chain is Probable cytosolic iron-sulfur protein assembly protein 1 (455 aa).

WD repeat units follow at residues 31 to 70, 90 to 129, 163 to 202, 208 to 247, 253 to 292, 318 to 365, and 380 to 453; these read GHSSRAWHLAWNPRMPILASCSGDKDVRLHAYSFVSTTSA, GHQRTVRQVAWSPDGKILATASFDSTVGIWERIQDIDGSS, GHESECKSVAFSYTGGVLASCSRDKSVWIWEVQPDAEFEC, EHSQDVKVVAWHPNDEVLASASYDDAIKLYIDDPSDDWFC, GHESTVWSISFSPCGNYLASASDDLTVRIWRRLDADQCEA, YHDR…DEKS, and HASA…YAAT.

It belongs to the WD repeat CIA1 family.

Its function is as follows. Essential component of the cytosolic iron-sulfur (Fe/S) protein assembly machinery. Required for the maturation of extramitochondrial Fe/S proteins. This chain is Probable cytosolic iron-sulfur protein assembly protein 1, found in Mycosarcoma maydis (Corn smut fungus).